The sequence spans 190 residues: Shikimate kinase (190 aa).

15-20 (GSGKST) is a binding site for ATP. Mg(2+) is bound at residue Ser-19. Substrate-binding residues include Asp-37, Arg-61, and Gly-83. Arg-121 serves as a coordination point for ATP. Position 148 (Arg-148) interacts with substrate.

The protein belongs to the shikimate kinase family. In terms of assembly, monomer. Mg(2+) serves as cofactor.

It localises to the cytoplasm. It carries out the reaction shikimate + ATP = 3-phosphoshikimate + ADP + H(+). It participates in metabolic intermediate biosynthesis; chorismate biosynthesis; chorismate from D-erythrose 4-phosphate and phosphoenolpyruvate: step 5/7. In terms of biological role, catalyzes the specific phosphorylation of the 3-hydroxyl group of shikimic acid using ATP as a cosubstrate. The sequence is that of Shikimate kinase from Chlorobium chlorochromatii (strain CaD3).